Consider the following 205-residue polypeptide: Rho-related GTP-binding protein RhoQ (205 aa).

16 to 23 (GDGAVGKT) is a binding site for GTP. The short motif at 38–46 (YVPTVFDHY) is the Effector region element. GTP contacts are provided by residues 63 to 67 (DTAGQ) and 121 to 124 (TQID). Cys202 is subject to Cysteine methyl ester. A lipid anchor (S-farnesyl cysteine) is attached at Cys202. A propeptide spans 203–205 (LIT) (removed in mature form).

It belongs to the small GTPase superfamily. Rho family. As to quaternary structure, interacts with CDC42EP4 in a GTP-dependent manner. Interacts with ARHGAP33/TCGAP. Interacts with CDC42EP1, CDC42EP2, CDC42EP3, PARD6A, PARD6G (and probably PARD6B) in a GTP-dependent manner. Part of a quaternary complex containing PARD3, some PARD6 protein (PARD6A, PARD6B or PARD6G) and some atypical PKC protein (PRKCI or PRKCZ). Interacts with EXO70 in a GTP-dependent manner. Interacts with GOPC. In terms of processing, may be post-translationally modified by both palmitoylation and polyisoprenylation.

It is found in the cytoplasm. The protein localises to the cell membrane. With respect to regulation, regulated by guanine nucleotide exchange factors (GEFs) which promote the exchange of bound GDP for free GTP, GTPase activating proteins (GAPs) which increase the GTP hydrolysis activity, and GDP dissociation inhibitors which inhibit the dissociation of the nucleotide from the GTPase. Functionally, plasma membrane-associated small GTPase which cycles between an active GTP-bound and an inactive GDP-bound state. In active state binds to a variety of effector proteins to regulate cellular responses. Involved in epithelial cell polarization processes. May play a role in CFTR trafficking to the plasma membrane. Causes the formation of thin, actin-rich surface projections called filopodia. The polypeptide is Rho-related GTP-binding protein RhoQ (RHOQ) (Homo sapiens (Human)).